The chain runs to 209 residues: Nucleoside triphosphate pyrophosphatase (209 aa).

The Proton acceptor role is filled by Asp74.

This sequence belongs to the Maf family. Requires a divalent metal cation as cofactor.

It is found in the cytoplasm. The catalysed reaction is a ribonucleoside 5'-triphosphate + H2O = a ribonucleoside 5'-phosphate + diphosphate + H(+). It catalyses the reaction a 2'-deoxyribonucleoside 5'-triphosphate + H2O = a 2'-deoxyribonucleoside 5'-phosphate + diphosphate + H(+). In terms of biological role, nucleoside triphosphate pyrophosphatase. May have a dual role in cell division arrest and in preventing the incorporation of modified nucleotides into cellular nucleic acids. The protein is Nucleoside triphosphate pyrophosphatase of Neorickettsia sennetsu (strain ATCC VR-367 / Miyayama) (Ehrlichia sennetsu).